Here is a 222-residue protein sequence, read N- to C-terminus: Cytidylate kinase (222 aa).

10–18 (GPAGAGKST) contacts ATP.

It belongs to the cytidylate kinase family. Type 1 subfamily.

Its subcellular location is the cytoplasm. It carries out the reaction CMP + ATP = CDP + ADP. The catalysed reaction is dCMP + ATP = dCDP + ADP. The protein is Cytidylate kinase of Halalkalibacterium halodurans (strain ATCC BAA-125 / DSM 18197 / FERM 7344 / JCM 9153 / C-125) (Bacillus halodurans).